The chain runs to 154 residues: Large ribosomal subunit protein uL13 (154 aa).

It belongs to the universal ribosomal protein uL13 family. As to quaternary structure, part of the 50S ribosomal subunit.

This protein is one of the early assembly proteins of the 50S ribosomal subunit, although it is not seen to bind rRNA by itself. It is important during the early stages of 50S assembly. The polypeptide is Large ribosomal subunit protein uL13 (Rhizobium rhizogenes (strain K84 / ATCC BAA-868) (Agrobacterium radiobacter)).